A 476-amino-acid chain; its full sequence is Arginine biosynthesis bifunctional protein ArgJ, mitochondrial (476 aa).

6 residues coordinate substrate: threonine 193, lysine 219, threonine 237, glutamate 337, asparagine 471, and serine 476. Threonine 237 functions as the Nucleophile in the catalytic mechanism.

It belongs to the ArgJ family. In terms of assembly, heterodimer of an alpha and a beta chain. The alpha and beta chains are autoproteolytically processed from a single precursor protein within the mitochondrion.

The protein resides in the mitochondrion matrix. It carries out the reaction N(2)-acetyl-L-ornithine + L-glutamate = N-acetyl-L-glutamate + L-ornithine. It catalyses the reaction L-glutamate + acetyl-CoA = N-acetyl-L-glutamate + CoA + H(+). Its pathway is amino-acid biosynthesis; L-arginine biosynthesis; L-ornithine and N-acetyl-L-glutamate from L-glutamate and N(2)-acetyl-L-ornithine (cyclic): step 1/1. It functions in the pathway amino-acid biosynthesis; L-arginine biosynthesis; N(2)-acetyl-L-ornithine from L-glutamate: step 1/4. Catalyzes two activities which are involved in the cyclic version of arginine biosynthesis: the synthesis of acetylglutamate from glutamate and acetyl-CoA, and of ornithine by transacetylation between acetylornithine and glutamate. This Cryptococcus neoformans var. neoformans serotype D (strain B-3501A) (Filobasidiella neoformans) protein is Arginine biosynthesis bifunctional protein ArgJ, mitochondrial.